A 166-amino-acid polypeptide reads, in one-letter code: Eukaryotic translation initiation factor 5A (166 aa).

A disordered region spans residues 1-21; sequence MSDEDHDFSHQGGGDNASKTY. Lys53 is subject to Hypusine. Positions 101–121 are disordered; that stretch reads EDPSLPSHLSLMDDEGESRED. The span at 112 to 121 shows a compositional bias: acidic residues; sequence MDDEGESRED.

Belongs to the eIF-5A family. In terms of processing, lys-53 undergoes hypusination, a unique post-translational modification that consists in the addition of a butylamino group from spermidine to lysine side chain, leading to the formation of the unusual amino acid hypusine. eIF-5As are the only known proteins to undergo this modification, which is essential for their function.

The protein localises to the cytoplasm. Translation factor that promotes translation elongation and termination, particularly upon ribosome stalling at specific amino acid sequence contexts. Binds between the exit (E) and peptidyl (P) site of the ribosome and promotes rescue of stalled ribosome: specifically required for efficient translation of polyproline-containing peptides as well as other motifs that stall the ribosome. Acts as a ribosome quality control (RQC) cofactor by joining the RQC complex to facilitate peptidyl transfer during CAT tailing step. In Leishmania donovani, this protein is Eukaryotic translation initiation factor 5A.